Reading from the N-terminus, the 157-residue chain is Probable succinate transporter subunit YjjB (157 aa).

4 consecutive transmembrane segments (helical) span residues 8–28, 55–75, 87–107, and 129–149; these read LALMQDMILSAIPAVGFAMVF, AGFNIEWSTFMASLLVGSIGI, VFTVAAVIPMFPGISAYTAMI, and FLKASSIVGALSIGLSVPGLW.

This sequence belongs to the ThrE exporter (TC 2.A.79) family. In terms of assembly, the transporter is composed of YjjB and YjjP.

Its subcellular location is the cell inner membrane. Its function is as follows. Involved in succinate export with YjjP. Both proteins are required for export. This chain is Probable succinate transporter subunit YjjB, found in Salmonella agona (strain SL483).